The chain runs to 185 residues: Ribosome maturation factor RimM (185 aa).

The 76-residue stretch at Glu-96–Val-171 folds into the PRC barrel domain. Residues Ile-165–Asp-185 form a disordered region.

The protein belongs to the RimM family. In terms of assembly, binds ribosomal protein uS19.

The protein resides in the cytoplasm. Its function is as follows. An accessory protein needed during the final step in the assembly of 30S ribosomal subunit, possibly for assembly of the head region. Essential for efficient processing of 16S rRNA. May be needed both before and after RbfA during the maturation of 16S rRNA. It has affinity for free ribosomal 30S subunits but not for 70S ribosomes. The chain is Ribosome maturation factor RimM from Maricaulis maris (strain MCS10) (Caulobacter maris).